The primary structure comprises 209 residues: Uracil phosphoribosyltransferase (209 aa).

5-phospho-alpha-D-ribose 1-diphosphate is bound by residues arginine 79, arginine 104, and 131–139 (DPMLATGGS). Uracil-binding positions include isoleucine 194 and 199–201 (GDA). Aspartate 200 serves as a coordination point for 5-phospho-alpha-D-ribose 1-diphosphate.

This sequence belongs to the UPRTase family. Mg(2+) is required as a cofactor.

The enzyme catalyses UMP + diphosphate = 5-phospho-alpha-D-ribose 1-diphosphate + uracil. The protein operates within pyrimidine metabolism; UMP biosynthesis via salvage pathway; UMP from uracil: step 1/1. Allosterically activated by GTP. Catalyzes the conversion of uracil and 5-phospho-alpha-D-ribose 1-diphosphate (PRPP) to UMP and diphosphate. The protein is Uracil phosphoribosyltransferase of Exiguobacterium sibiricum (strain DSM 17290 / CCUG 55495 / CIP 109462 / JCM 13490 / 255-15).